Reading from the N-terminus, the 337-residue chain is Nucleoid-associated protein HSM_0096 (337 aa).

Belongs to the YejK family.

It is found in the cytoplasm. The protein localises to the nucleoid. The chain is Nucleoid-associated protein HSM_0096 from Histophilus somni (strain 2336) (Haemophilus somnus).